The following is a 20-amino-acid chain: Unknown protein NF003 from 2D-PAGE (20 aa).

This chain is Unknown protein NF003 from 2D-PAGE, found in Naegleria fowleri (Brain eating amoeba).